The following is a 337-amino-acid chain: tRNA dimethylallyltransferase (337 aa).

Residue 24-31 (GPTGAGKT) participates in ATP binding. 26–31 (TGAGKT) contacts substrate. 2 interaction with substrate tRNA regions span residues 49 to 52 (DSRQ) and 188 to 192 (QRAVR).

This sequence belongs to the IPP transferase family. As to quaternary structure, monomer. It depends on Mg(2+) as a cofactor.

The enzyme catalyses adenosine(37) in tRNA + dimethylallyl diphosphate = N(6)-dimethylallyladenosine(37) in tRNA + diphosphate. Catalyzes the transfer of a dimethylallyl group onto the adenine at position 37 in tRNAs that read codons beginning with uridine, leading to the formation of N6-(dimethylallyl)adenosine (i(6)A). In Nitratidesulfovibrio vulgaris (strain DSM 19637 / Miyazaki F) (Desulfovibrio vulgaris), this protein is tRNA dimethylallyltransferase.